The chain runs to 580 residues: Long-chain-fatty-acid--AMP ligase FadD28 (580 aa).

The disordered stretch occupies residues S421 to P440.

Belongs to the ATP-dependent AMP-binding enzyme family.

It catalyses the reaction holo-[mycocerosate synthase] + a long-chain fatty acid + ATP = a long-chain fatty acyl-[mycocerosate synthase] + AMP + diphosphate. The catalysed reaction is a long-chain fatty acid + ATP + H(+) = a long-chain fatty acyl-AMP + diphosphate. It carries out the reaction holo-[mycocerosate synthase] + a long-chain fatty acyl-AMP = a long-chain fatty acyl-[mycocerosate synthase] + AMP + H(+). Its pathway is lipid metabolism; fatty acid biosynthesis. Involved in the biosynthesis of phthiocerol dimycocerosate (PDIM), a cell wall-associated lipid found only in pathogenic mycobacteria. Catalyzes the activation of long-chain fatty acids as acyl-adenylates (acyl-AMP), which are then transferred to the multifunctional polyketide synthase Mas for further chain extension. In Mycobacterium bovis (strain ATCC BAA-935 / AF2122/97), this protein is Long-chain-fatty-acid--AMP ligase FadD28 (fadD28).